The following is a 300-amino-acid chain: UDP-N-acetylenolpyruvoylglucosamine reductase (300 aa).

The region spanning 28-193 is the FAD-binding PCMH-type domain; sequence KTGGPADVLA…LQATFALEKG (166 aa). Arg-172 is an active-site residue. Ser-222 functions as the Proton donor in the catalytic mechanism. The active site involves Glu-292.

This sequence belongs to the MurB family. FAD serves as cofactor.

It is found in the cytoplasm. The catalysed reaction is UDP-N-acetyl-alpha-D-muramate + NADP(+) = UDP-N-acetyl-3-O-(1-carboxyvinyl)-alpha-D-glucosamine + NADPH + H(+). Its pathway is cell wall biogenesis; peptidoglycan biosynthesis. Cell wall formation. The polypeptide is UDP-N-acetylenolpyruvoylglucosamine reductase (Enterococcus faecalis (strain ATCC 700802 / V583)).